The following is a 64-amino-acid chain: Copper-metallothionein (64 aa).

The residue at position 1 (Ser-1) is an N-acetylserine. Residues Cys-7, Cys-11, Cys-16, Cys-18, Cys-22, Cys-24, Cys-28, Cys-30, Cys-33, Cys-36, Cys-38, Cys-43, Cys-45, Cys-49, Cys-55, Cys-57, Cys-61, and Cys-63 each coordinate Cu(+).

The protein belongs to the metallothionein superfamily. Type 2 family.

In terms of biological role, the metallothioneins are involved in the cellular sequestration of toxic metal ions and regulation of essential trace elements. This isoform binds exclusively copper. This Helix pomatia (Roman snail) protein is Copper-metallothionein.